Consider the following 271-residue polypeptide: Phosphate import ATP-binding protein PstB 2 (271 aa).

One can recognise an ABC transporter domain in the interval 25 to 266; it reads MATEDLHVYY…PQEKQTEDYI (242 aa). 57-64 contributes to the ATP binding site; that stretch reads GPSGCGKS.

Belongs to the ABC transporter superfamily. Phosphate importer (TC 3.A.1.7) family. The complex is composed of two ATP-binding proteins (PstB), two transmembrane proteins (PstC and PstA) and a solute-binding protein (PstS).

The protein resides in the cell membrane. It carries out the reaction phosphate(out) + ATP + H2O = ADP + 2 phosphate(in) + H(+). Part of the ABC transporter complex PstSACB involved in phosphate import. Responsible for energy coupling to the transport system. In Listeria monocytogenes serovar 1/2a (strain ATCC BAA-679 / EGD-e), this protein is Phosphate import ATP-binding protein PstB 2.